The primary structure comprises 287 residues: NAD-dependent protein deacylase sir-2.2 (287 aa).

The Deacetylase sirtuin-type domain maps to 10-287 (AELCENSLKK…YKISDVLKEM (278 aa)). Residues 35 to 55 (GAGISTESGIPDYRSKDVGLY) and 116 to 119 (QNVD) contribute to the NAD(+) site. The active-site Proton acceptor is His134. Zn(2+)-binding residues include Cys142, Cys145, Cys196, and Cys199. NAD(+) is bound by residues 236–238 (GTS), 262–264 (NIG), and Ile280.

It belongs to the sirtuin family. Class II subfamily. As to quaternary structure, interacts with pyc-1, pcca-1 and mccc-1. Zn(2+) serves as cofactor. As to expression, ubiquitously expressed with high expression in the pharynx, body wall muscles and gonad.

The protein localises to the mitochondrion matrix. It localises to the mitochondrion. The catalysed reaction is N(6)-acetyl-L-lysyl-[protein] + NAD(+) + H2O = 2''-O-acetyl-ADP-D-ribose + nicotinamide + L-lysyl-[protein]. In terms of biological role, NAD-dependent protein deacylase. Catalyzes the NAD-dependent hydrolysis of acyl groups from lysine residues. Plays a role in oxidative stress resistance. In Caenorhabditis elegans, this protein is NAD-dependent protein deacylase sir-2.2 (sir-2.2).